The primary structure comprises 536 residues: Transcription factor cheR (536 aa).

The segment at residues 19-57 is a DNA-binding region (zn(2)-C6 fungal-type); the sequence is CDRCHRHKLRCERSSVIVNGGVAVPLGPCKRCLKACIPC. 2 disordered regions span residues 70 to 122 and 220 to 243; these read AKTG…LSGT and ALTD…PREE. The span at 88-108 shows a compositional bias: low complexity; the sequence is AASPAKRAPSPARRPTASTPR.

The protein resides in the nucleus. Functionally, transcription factor; part of the gene cluster that mediates the biosynthesis of chaetoglobosin A which has a unique inhibitory activity against actin polymerization in mammalian cells. Chaetoglobosin A and its intermediates are involved in the morphological differentiation of C.globosum. Binds directly to asymmetric direct repeats present in the promoters of the chaetoglobosin A cluster genes. The sequence is that of Transcription factor cheR from Chaetomium globosum (strain ATCC 6205 / CBS 148.51 / DSM 1962 / NBRC 6347 / NRRL 1970) (Soil fungus).